We begin with the raw amino-acid sequence, 271 residues long: Nuclear egress protein 2 (271 aa).

Residues 1 to 249 are Perinuclear space-facing; it reads MSVVGKRVVD…LGRAVALVRR (249 aa). A helical transmembrane segment spans residues 250 to 267; it reads SWPWISAGIAFLCLGLVW. Residues 268–271 lie on the Nuclear side of the membrane; the sequence is MRPS.

This sequence belongs to the herpesviridae NEC2 protein family. In terms of assembly, forms a heterohexameric complex with NEC1. Post-translationally, phosphorylated.

It is found in the host nucleus inner membrane. Its function is as follows. Plays an essential role in virion nuclear egress, the first step of virion release from infected cell. Within the host nucleus, NEC1 interacts with the newly formed capsid through the vertexes and directs it to the inner nuclear membrane by associating with NEC2. Induces the budding of the capsid at the inner nuclear membrane as well as its envelopment into the perinuclear space. There, the NEC1/NEC2 complex promotes the fusion of the enveloped capsid with the outer nuclear membrane and the subsequent release of the viral capsid into the cytoplasm where it will reach the secondary budding sites in the host Golgi or trans-Golgi network. The chain is Nuclear egress protein 2 from Homo sapiens (Human).